The primary structure comprises 1909 residues: DENN domain-containing protein 4C (1909 aa).

The region spanning 40–199 (KAPITDIAII…SVFLCYKKSV (160 aa)) is the MABP domain. One can recognise a uDENN domain in the interval 191 to 364 (VFLCYKKSVP…NIPFPSPQRP (174 aa)). Positions 385 to 521 (PLPLSGANFS…PCKNLLSTLK (137 aa)) constitute a cDENN domain. The region spanning 523–641 (LYPQLSSVHQ…CSFVSDKDTG (119 aa)) is the dDENN domain. Phosphoserine occurs at positions 703, 737, and 741. The PPR repeat unit spans residues 821–855 (VCYRVVMQLCGLWGHPVLAVRVLFEMKTARIKPNA). Glutamate 953, serine 965, serine 968, and serine 973 each carry phosphoserine. Threonine 975 carries the post-translational modification Phosphothreonine. Residues serine 989, serine 996, serine 1003, serine 1046, serine 1061, serine 1099, serine 1126, serine 1184, serine 1225, serine 1244, serine 1252, and serine 1278 each carry the phosphoserine modification. Disordered stretches follow at residues 1243–1263 (KSPLGSKSSSMELHREENRES) and 1277–1338 (SSLP…HGSL). The segment covering 1296 to 1316 (SSPAVSRSKTFTGRFKQQTPS) has biased composition (polar residues). Residues serine 1325, serine 1337, and serine 1346 each carry the phosphoserine modification. The interval 1419–1474 (SGLVPSELTQSNTSLGSSSSSGDVGKLHYPTGEVPFPRGMKGQDFEKSDHGSSQNT) is disordered. Low complexity predominate over residues 1426–1440 (LTQSNTSLGSSSSSG). Residues 1459 to 1468 (KGQDFEKSDH) show a composition bias toward basic and acidic residues. Phosphoserine is present on residues serine 1623, serine 1627, serine 1629, serine 1640, and serine 1799.

In terms of processing, phosphorylated in response to insulin.

The protein resides in the cytoplasmic vesicle membrane. The protein localises to the cell membrane. It is found in the cytoplasm. Its subcellular location is the cytosol. Functionally, guanine nucleotide exchange factor (GEF) activating RAB10. Promotes the exchange of GDP to GTP, converting inactive GDP-bound RAB10 into its active GTP-bound form. Thereby, stimulates SLC2A4/GLUT4 glucose transporter-enriched vesicles delivery to the plasma membrane in response to insulin. This is DENN domain-containing protein 4C (DENND4C) from Homo sapiens (Human).